A 510-amino-acid polypeptide reads, in one-letter code: D-allose import ATP-binding protein AlsA (510 aa).

ABC transporter domains lie at 6-245 and 260-509; these read ISMA…VGRE and LAHE…ALPQ. Residue 38–45 coordinates ATP; it reads GENGAGKS.

The protein belongs to the ABC transporter superfamily. D-allose importer (TC 3.A.1.2.6) family. The complex is composed of two ATP-binding proteins (AlsA), two transmembrane proteins (AlsC) and a solute-binding protein (AlsB).

Its subcellular location is the cell inner membrane. The enzyme catalyses D-allose(out) + ATP + H2O = D-allose(in) + ADP + phosphate + H(+). In terms of biological role, part of the ABC transporter complex AlsBAC involved in D-allose import. Probably responsible for energy coupling to the transport system. The chain is D-allose import ATP-binding protein AlsA (alsA) from Escherichia coli (strain K12).